The sequence spans 323 residues: MIRSVVRGIGSALPKRVMKNTDFEGIIETSDEWIVQRTGIRERHIAGDDETTVSLGTAAARAAIENAGLQPTDIDLVLLATSTPNHTFPASAVEIQRELGITKGFAFDMQAVCSGFIYAITTADLYIRGGMAKRVLVIGAETFSRILDWNDRTTCVLFGDGAGALVLEAAEGNGLTSDRGVLAANLRSDGNHKEKLFVDGGPSTTQTVGHLRMEGREVFKHAVGMITDVIEASFEETGLTAEDIDWFVPHQANKRIIDASAKKLNIAEGKVVITVDRHGNTSAASVPLALATAVADGRIKKGDLVLLEAMGGGFTWGAVLLRW.

Catalysis depends on residues cysteine 113 and histidine 250. The segment at 251–255 (QANKR) is ACP-binding. The active site involves asparagine 280.

This sequence belongs to the thiolase-like superfamily. FabH family. As to quaternary structure, homodimer.

It localises to the cytoplasm. The catalysed reaction is malonyl-[ACP] + acetyl-CoA + H(+) = 3-oxobutanoyl-[ACP] + CO2 + CoA. Its pathway is lipid metabolism; fatty acid biosynthesis. Functionally, catalyzes the condensation reaction of fatty acid synthesis by the addition to an acyl acceptor of two carbons from malonyl-ACP. Catalyzes the first condensation reaction which initiates fatty acid synthesis and may therefore play a role in governing the total rate of fatty acid production. Possesses both acetoacetyl-ACP synthase and acetyl transacylase activities. Its substrate specificity determines the biosynthesis of branched-chain and/or straight-chain of fatty acids. The protein is Beta-ketoacyl-[acyl-carrier-protein] synthase III of Brucella anthropi (strain ATCC 49188 / DSM 6882 / CCUG 24695 / JCM 21032 / LMG 3331 / NBRC 15819 / NCTC 12168 / Alc 37) (Ochrobactrum anthropi).